Here is a 104-residue protein sequence, read N- to C-terminus: Large ribosomal subunit protein uL24 (104 aa).

This sequence belongs to the universal ribosomal protein uL24 family. As to quaternary structure, part of the 50S ribosomal subunit.

One of two assembly initiator proteins, it binds directly to the 5'-end of the 23S rRNA, where it nucleates assembly of the 50S subunit. Its function is as follows. One of the proteins that surrounds the polypeptide exit tunnel on the outside of the subunit. The polypeptide is Large ribosomal subunit protein uL24 (Pectobacterium atrosepticum (strain SCRI 1043 / ATCC BAA-672) (Erwinia carotovora subsp. atroseptica)).